A 288-amino-acid chain; its full sequence is Store-operated calcium entry regulator STIMATE (288 aa).

Residues 1 to 28 (MQGPGGNVSRGLPGGPASTVASGAGRCE) are Cytoplasmic-facing. Transmembrane regions (helical) follow at residues 29 to 49 (SGAL…VVAF), 69 to 89 (IWFL…FANV), and 102 to 122 (LYLI…YVGV). The GXXXG motif signature appears at 149 to 153 (GAWVG). Helical transmembrane passes span 156–176 (ALYI…LLIL) and 194–214 (LAIV…WVVD). The Cytoplasmic portion of the chain corresponds to 215-288 (NFLMRKGKTK…KKKHRFGLPV (74 aa)). The tract at residues 228-288 (EERGANQDSR…KKKHRFGLPV (61 aa)) is disordered. A required for localization in the endoplasmic reticulum region spans residues 241-246 (KVRYRR). Acidic residues predominate over residues 261 to 272 (ADDEMEESDAEE). Over residues 277-288 (PVKKKHRFGLPV) the composition is skewed to basic residues.

It belongs to the STIMATE family. Homooligomer. Interacts with STIM1.

Its subcellular location is the endoplasmic reticulum membrane. Functionally, acts as a regulator of store-operated Ca(2+) entry (SOCE) at junctional sites that connect the endoplasmic reticulum (ER) and plasma membrane (PM), called ER-plasma membrane (ER-PM) junction or cortical ER. SOCE is a Ca(2+) influx following depletion of intracellular Ca(2+) stores. Acts by interacting with STIM1, promoting STIM1 conformational switch. Involved in STIM1 relocalization to ER-PM junctions. Contributes to the maintenance and reorganization of store-dependent ER-PM junctions. The chain is Store-operated calcium entry regulator STIMATE from Rattus norvegicus (Rat).